Here is a 651-residue protein sequence, read N- to C-terminus: Beta-glucuronidase (651 aa).

A signal peptide spans 1-22 (MSRGPAGAWVALGPLLWTCGLA). Residues Asn-172 and Asn-419 are each glycosylated (N-linked (GlcNAc...) asparagine). The Proton donor role is filled by Glu-450. A glycan (N-linked (GlcNAc...) asparagine) is linked at Asn-630.

Belongs to the glycosyl hydrolase 2 family. In terms of assembly, homotetramer.

It localises to the lysosome. The catalysed reaction is a beta-D-glucuronoside + H2O = D-glucuronate + an alcohol. Its activity is regulated as follows. Inhibited by L-aspartic acid. Plays an important role in the degradation of dermatan and keratan sulfates. The protein is Beta-glucuronidase (GUSB) of Canis lupus familiaris (Dog).